The sequence spans 270 residues: Glucosamine-6-phosphate deaminase (270 aa).

The Proton acceptor; for enolization step role is filled by Asp-68. Asp-145 functions as the For ring-opening step in the catalytic mechanism. Residue His-147 is the Proton acceptor; for ring-opening step of the active site. Glu-152 acts as the For ring-opening step in catalysis.

Belongs to the glucosamine/galactosamine-6-phosphate isomerase family. NagB subfamily.

It catalyses the reaction alpha-D-glucosamine 6-phosphate + H2O = beta-D-fructose 6-phosphate + NH4(+). It participates in amino-sugar metabolism; N-acetylneuraminate degradation; D-fructose 6-phosphate from N-acetylneuraminate: step 5/5. In terms of biological role, catalyzes the reversible isomerization-deamination of glucosamine 6-phosphate (GlcN6P) to form fructose 6-phosphate (Fru6P) and ammonium ion. The polypeptide is Glucosamine-6-phosphate deaminase (Bifidobacterium longum (strain NCC 2705)).